We begin with the raw amino-acid sequence, 597 residues long: Nucleolar protein 58 (597 aa).

Residues Ile285–Gly410 enclose the Nop domain. The segment at Ala452–Glu597 is disordered. Residues Lys482–Lys499 show a composition bias toward basic residues. Basic and acidic residues predominate over residues Ile532–Ala551. Residues Glu552–Glu561 are compositionally biased toward acidic residues. Residues Lys588–Glu597 show a composition bias toward basic residues.

It belongs to the NOP5/NOP56 family.

Its subcellular location is the nucleus. The protein localises to the nucleolus. Its function is as follows. Required for pre-18S rRNA processing. May bind microtubules. The protein is Nucleolar protein 58 (nop-58) of Neurospora crassa (strain ATCC 24698 / 74-OR23-1A / CBS 708.71 / DSM 1257 / FGSC 987).